Here is an 853-residue protein sequence, read N- to C-terminus: Protein translocase subunit SecA 1 (853 aa).

Residues Gln-85, 103–107, and Asp-492 contribute to the ATP site; that span reads GEGKT.

Belongs to the SecA family. In terms of assembly, monomer and homodimer. Part of the essential Sec protein translocation apparatus which comprises SecA, SecYEG and auxiliary proteins SecDF. Other proteins may also be involved.

It is found in the cell membrane. The protein localises to the cytoplasm. The enzyme catalyses ATP + H2O + cellular proteinSide 1 = ADP + phosphate + cellular proteinSide 2.. Functionally, part of the Sec protein translocase complex. Interacts with the SecYEG preprotein conducting channel. Has a central role in coupling the hydrolysis of ATP to the transfer of proteins into and across the cell membrane, serving as an ATP-driven molecular motor driving the stepwise translocation of polypeptide chains across the membrane. The polypeptide is Protein translocase subunit SecA 1 (Corynebacterium diphtheriae (strain ATCC 700971 / NCTC 13129 / Biotype gravis)).